A 270-amino-acid polypeptide reads, in one-letter code: Urease accessory protein UreD (270 aa).

The protein belongs to the UreD family. In terms of assembly, ureD, UreF and UreG form a complex that acts as a GTP-hydrolysis-dependent molecular chaperone, activating the urease apoprotein by helping to assemble the nickel containing metallocenter of UreC. The UreE protein probably delivers the nickel.

The protein localises to the cytoplasm. Functionally, required for maturation of urease via the functional incorporation of the urease nickel metallocenter. This Synechocystis sp. (strain ATCC 27184 / PCC 6803 / Kazusa) protein is Urease accessory protein UreD.